The primary structure comprises 1153 residues: PPi-type phosphoenolpyruvate carboxykinase 3 (1153 aa).

Positions 1085 to 1131 (RQKLEVAKLNKDLAYLNKTIAEKPRLAETLNKQIAAVKEELQYVSSE) form a coiled coil.

This sequence belongs to the PPi-type phosphoenolpyruvate carboxykinase family. Monomer and trimer; forms heterotrimers with PEPCK1 and PEPCK2.

Its subcellular location is the cytoplasm. The protein resides in the cytosol. The enzyme catalyses oxaloacetate + diphosphate = phosphoenolpyruvate + phosphate + CO2. In terms of biological role, inorganic pyrophosphate (PPi)-dependent phosphoenolpyruvate carboxykinase, which regulates the carbon flow of the central metabolism by fixing CO(2) to phosphoenolpyruvate to produce oxaloacetate. Can also produce pyruvate and diphosphate from phosphoenolpyruvate and phosphate. This Entamoeba histolytica (strain ATCC 30459 / HM-1:IMSS / ABRM) protein is PPi-type phosphoenolpyruvate carboxykinase 3.